Here is a 330-residue protein sequence, read N- to C-terminus: PDZ and LIM domain protein 4 (330 aa).

The PDZ domain occupies 8–84 (RGPSPWGFRL…QLLLSVSRAE (77 aa)). Disordered stretches follow at residues 106-152 (EPEP…SSSA) and 163-182 (LHISPSQSTDPLKSLPRNRN). Over residues 139-152 (QHPQPSRPHASSSA) the composition is skewed to polar residues. One can recognise an LIM zinc-binding domain in the interval 255–305 (CTRCGNGIVGTIVKARDKLYHPECFMCDDCGLNLKQRGYFFIEEQLYCETH).

In terms of assembly, interacts (via LIM domain) with PTPN13. Interacts (via PDZ domain) with ACTN1.

The protein resides in the cytoplasm. Its subcellular location is the cytoskeleton. The protein localises to the cell projection. It is found in the dendritic spine. It localises to the early endosome membrane. The protein resides in the recycling endosome membrane. Its subcellular location is the nucleus. The protein localises to the perinuclear region. It is found in the lamellipodium. It localises to the synapse. The protein resides in the synaptosome. Suppresses SRC activation by recognizing and binding to active SRC and facilitating PTPN13-mediated dephosphorylation of SRC 'Tyr-419' leading to its inactivation. Inactivated SRC dissociates from this protein allowing the initiation of a new SRC inactivation cycle. Involved in reorganization of the actin cytoskeleton. In nonmuscle cells, binds to ACTN1 (alpha-actinin-1), increases the affinity of ACTN1 to F-actin (filamentous actin), and promotes formation of actin stress fibers. Involved in regulation of the synaptic AMPA receptor transport in dendritic spines of hippocampal pyramidal neurons directing the receptors toward an insertion at the postsynaptic membrane. Links endosomal surface-internalized GRIA1-containing AMPA receptors to the alpha-actinin/actin cytoskeleton. Increases AMPA receptor-mediated excitatory postsynaptic currents in neurons. This is PDZ and LIM domain protein 4 (PDLIM4) from Gallus gallus (Chicken).